Reading from the N-terminus, the 1464-residue chain is DNA polymerase III PolC-type (1464 aa).

The 157-residue stretch at 426–582 (YVVFDVETTG…YDAEATGRLL (157 aa)) folds into the Exonuclease domain.

It belongs to the DNA polymerase type-C family. PolC subfamily.

It localises to the cytoplasm. It catalyses the reaction DNA(n) + a 2'-deoxyribonucleoside 5'-triphosphate = DNA(n+1) + diphosphate. Required for replicative DNA synthesis. This DNA polymerase also exhibits 3' to 5' exonuclease activity. This chain is DNA polymerase III PolC-type, found in Streptococcus thermophilus (strain ATCC BAA-491 / LMD-9).